The primary structure comprises 720 residues: DNA replication licensing factor mcm7-B (720 aa).

Residues 183–210 form a C4-type zinc finger; it reads CDQCGAETYQPIQSPTFMPLIMCPSREC. The MCM domain occupies 331–537; it reads FYEKLAASIA…NDLRLAQHIT (207 aa). The ATP site is built by Y344, G383, A385, K386, S387, N488, R513, and R603. The short motif at 512–515 is the Arginine finger element; sequence SRFD.

The protein belongs to the MCM family. In terms of assembly, component of the mcm2-7 complex (RLF-M). The complex forms a toroidal hexameric ring with the proposed subunit order mcm2-mcm6-mcm4-mcm7-mcm3-mcm5. The heterodimer of mmcm3/mcm5 interacts with mcm4, mmcm6, mcm7 and weakly with mcm2. The N-terminus is required for interaction with mmcm3, though this interaction may not be direct, and remains in a complex with mmcm3 throughout the cell cycle. Begins to associate with zmcm6 at the neurula stage. Component of the replisome complex. Component of the CMG helicase complex, composed of the mcm2-7 complex, the GINS complex and cdc45. Post-translationally, ubiquitinated by traip when forks converge following formation of DNA interstrand cross-links. Short ubiquitin chains on mcm7 promote recruitment of DNA glycosylase neil3. If the interstrand cross-link cannot be cleaved by neil3, the ubiquitin chains continue to grow on mcm7, promoting the unloading of the CMG helicase complex by the vcp/p97 ATPase.

Its subcellular location is the nucleus. It is found in the chromosome. The enzyme catalyses ATP + H2O = ADP + phosphate + H(+). Its function is as follows. Acts as a component of the mcm2-7 complex (mcm complex) which is the putative replicative helicase essential for 'once per cell cycle' DNA replication initiation and elongation in eukaryotic cells. The active ATPase sites in the mcm2-7 ring are formed through the interaction surfaces of two neighboring subunits such that a critical structure of a conserved arginine finger motif is provided in trans relative to the ATP-binding site of the Walker A box of the adjacent subunit. The six ATPase active sites, however, are likely to contribute differentially to the complex helicase activity. The existence of maternal and zygotic forms of mcm3 and mcm6 suggests that specific forms of mcm2-7 complexes may be used during different stages of development. This is DNA replication licensing factor mcm7-B (mcm7-b) from Xenopus laevis (African clawed frog).